The following is a 1224-amino-acid chain: uncharacterized protein (1224 aa).

6 disordered regions span residues 1–67, 111–151, 193–270, 316–416, 430–957, and 1078–1167; these read MNQD…SSSI, QQSH…PPPL, QTEL…DPNI, DYNN…TVKK, SDSG…QEEK, and SFLP…TSHV. Over residues 10–48 the composition is skewed to low complexity; that stretch reads SFHSNNNSNSNHHHSYNNSINSGSSSSGSNNSSNNNSFN. A compositionally biased stretch (acidic residues) spans 49–58; sequence DEIEGGEIQE. 3 stretches are compositionally biased toward low complexity: residues 126–140, 193–212, and 228–241; these read SSSSSSSSSSSSSSS, QTELQNKSTPSKTSSASSPP, and SAPTSAPTSSSVSS. The span at 242-255 shows a compositional bias: polar residues; sequence LTQPQKPKSVQYSQ. Residues 260-270 are compositionally biased toward basic and acidic residues; that stretch reads EIREEKVDPNI. Low complexity predominate over residues 316 to 338; that stretch reads DYNNSNSNNSNNNNNNNNSITEN. The segment covering 341 to 353 has biased composition (polar residues); sequence DKMINNQPSSTNS. 2 stretches are compositionally biased toward low complexity: residues 379–413 and 430–450; these read TTTTTTTTTTSSTSEPIKSPNSSSSTNSSASTTPT and SDSGTNKESNSSNSSSTTSTP. 2 stretches are compositionally biased toward basic and acidic residues: residues 451-585 and 630-646; these read KSKD…DKKK and EIDKSDKRSQKKSKVES. The segment covering 662 to 719 has biased composition (low complexity); the sequence is TTTTTTSTSSSSSLPSLSSSSSSLPLPSSSSSSSSSSSSSSSSSSSSSSSSSSSTTST. Positions 727–750 are enriched in pro residues; that stretch reads PPPPPQQPPPPPPQQPPPPPPPIN. Basic and acidic residues predominate over residues 755-892; that stretch reads SEHDKKIIEK…SDRDRDRKDS (138 aa). A compositionally biased stretch (low complexity) spans 893–933; that stretch reads NSNNNSNNNNNNNNNNNNNNNNNNNNKKDNNNNNNNNNNNN. The segment covering 948–957 has biased composition (basic and acidic residues); sequence TPKKTKQEEK. Residues 950–991 adopt a coiled-coil conformation; that stretch reads KKTKQEEKLIRSQIDQIKEDAKDLKKLAKELQSKNQNECLEM. 2 stretches are compositionally biased toward low complexity: residues 1078-1108 and 1114-1165; these read SFLPNSSSSSKSSSSSSSSSNQPANPATAPL and NPSE…PNTS.

This is an uncharacterized protein from Dictyostelium discoideum (Social amoeba).